The following is a 277-amino-acid chain: Purine nucleoside phosphorylase 2 (277 aa).

Residues H65, 85-87 (RGH), and A117 each bind phosphate. A purine D-ribonucleoside is bound at residue E197. S216 is a phosphate binding site. N239 is an a purine D-ribonucleoside binding site.

It belongs to the PNP/MTAP phosphorylase family. In terms of assembly, hexamer. Dimer of trimers.

It catalyses the reaction a purine D-ribonucleoside + phosphate = a purine nucleobase + alpha-D-ribose 1-phosphate. It functions in the pathway purine metabolism; xanthosine degradation. The protein operates within purine metabolism; purine nucleoside salvage. Rapidly inactivated by p-chloromercuriphenylsulfonic acid (p-CMB). Dithiothreitol incubation restores the activity. In terms of biological role, the purine nucleoside phosphorylases catalyze the phosphorolytic breakdown of the N-glycosidic bond in the beta-(deoxy)ribonucleoside molecules, with the formation of the corresponding free purine bases and pentose-1-phosphate. This protein can degrade all purine nucleosides including xanthosine, inosine and guanosine, but cannot cleave adenosine, deoxyadenosine or hypoxanthine arabinoside. Has a preference for the neutral over the monoanionic form of xanthosine. The sequence is that of Purine nucleoside phosphorylase 2 (xapA) from Escherichia coli (strain K12).